Consider the following 217-residue polypeptide: Probable transaldolase (217 aa).

Residue Lys83 is the Schiff-base intermediate with substrate of the active site.

It belongs to the transaldolase family. Type 3B subfamily.

The protein localises to the cytoplasm. The catalysed reaction is D-sedoheptulose 7-phosphate + D-glyceraldehyde 3-phosphate = D-erythrose 4-phosphate + beta-D-fructose 6-phosphate. The protein operates within carbohydrate degradation; pentose phosphate pathway; D-glyceraldehyde 3-phosphate and beta-D-fructose 6-phosphate from D-ribose 5-phosphate and D-xylulose 5-phosphate (non-oxidative stage): step 2/3. In terms of biological role, transaldolase is important for the balance of metabolites in the pentose-phosphate pathway. This is Probable transaldolase from Bartonella bacilliformis (strain ATCC 35685 / KC583 / Herrer 020/F12,63).